A 434-amino-acid polypeptide reads, in one-letter code: Chaperone SurA (434 aa).

A signal peptide spans 1 to 22 (MKPSKHLIFALFALAISQPTMA). 2 consecutive PpiC domains span residues 173 to 274 (DVEY…KIMD) and 283 to 383 (IEEV…QLEE).

It is found in the periplasm. The enzyme catalyses [protein]-peptidylproline (omega=180) = [protein]-peptidylproline (omega=0). In terms of biological role, chaperone involved in the correct folding and assembly of outer membrane proteins. Recognizes specific patterns of aromatic residues and the orientation of their side chains, which are found more frequently in integral outer membrane proteins. May act in both early periplasmic and late outer membrane-associated steps of protein maturation. This Shewanella sp. (strain MR-7) protein is Chaperone SurA.